The following is a 400-amino-acid chain: Serine/threonine transporter SstT (400 aa).

The next 10 membrane-spanning stretches (helical) occupy residues 11 to 31 (IGLV…GWLA), 45 to 65 (FVGA…MAAI), 81 to 101 (IMYM…SFLF), 138 to 158 (AIAE…GFAL), 175 to 195 (AISQ…LGLV), 213 to 233 (ILMV…PLII), 242 to 264 (YPLV…SSAA), 295 to 315 (MAGA…TLGI), 327 to 347 (LVAT…LLLI), and 354 to 374 (FSIP…IGVI).

This sequence belongs to the dicarboxylate/amino acid:cation symporter (DAACS) (TC 2.A.23) family.

Its subcellular location is the cell inner membrane. It catalyses the reaction L-serine(in) + Na(+)(in) = L-serine(out) + Na(+)(out). The enzyme catalyses L-threonine(in) + Na(+)(in) = L-threonine(out) + Na(+)(out). Functionally, involved in the import of serine and threonine into the cell, with the concomitant import of sodium (symport system). This is Serine/threonine transporter SstT from Psychrobacter cryohalolentis (strain ATCC BAA-1226 / DSM 17306 / VKM B-2378 / K5).